Consider the following 147-residue polypeptide: D-aminoacyl-tRNA deacylase (147 aa).

A Gly-cisPro motif, important for rejection of L-amino acids motif is present at residues 137–138; that stretch reads GP.

This sequence belongs to the DTD family. As to quaternary structure, homodimer.

The protein localises to the cytoplasm. It catalyses the reaction glycyl-tRNA(Ala) + H2O = tRNA(Ala) + glycine + H(+). It carries out the reaction a D-aminoacyl-tRNA + H2O = a tRNA + a D-alpha-amino acid + H(+). Functionally, an aminoacyl-tRNA editing enzyme that deacylates mischarged D-aminoacyl-tRNAs. Also deacylates mischarged glycyl-tRNA(Ala), protecting cells against glycine mischarging by AlaRS. Acts via tRNA-based rather than protein-based catalysis; rejects L-amino acids rather than detecting D-amino acids in the active site. By recycling D-aminoacyl-tRNA to D-amino acids and free tRNA molecules, this enzyme counteracts the toxicity associated with the formation of D-aminoacyl-tRNA entities in vivo and helps enforce protein L-homochirality. In Exiguobacterium sp. (strain ATCC BAA-1283 / AT1b), this protein is D-aminoacyl-tRNA deacylase.